The following is a 635-amino-acid chain: DNA mismatch repair protein MutL (635 aa).

The interval 359–399 (GTNKYAQPEAAKSSAAEQAVARERSSARERAAPAYKEDHPY) is disordered. Low complexity predominate over residues 364-377 (AQPEAAKSSAAEQA). Residues 378 to 399 (VARERSSARERAAPAYKEDHPY) are compositionally biased toward basic and acidic residues.

This sequence belongs to the DNA mismatch repair MutL/HexB family.

In terms of biological role, this protein is involved in the repair of mismatches in DNA. It is required for dam-dependent methyl-directed DNA mismatch repair. May act as a 'molecular matchmaker', a protein that promotes the formation of a stable complex between two or more DNA-binding proteins in an ATP-dependent manner without itself being part of a final effector complex. The polypeptide is DNA mismatch repair protein MutL (Yersinia pestis bv. Antiqua (strain Antiqua)).